The sequence spans 350 residues: Protein CONSERVED ONLY IN THE GREEN LINEAGE 160, chloroplastic (350 aa).

Residues 1 to 46 constitute a chloroplast transit peptide; it reads MAILSYISATSTTPPIPQDQSPNSRLPTKIILPNKKPEKWSTGVAP. Polar residues predominate over residues 7 to 26; the sequence is ISATSTTPPIPQDQSPNSRL. The segment at 7 to 58 is disordered; that stretch reads ISATSTTPPIPQDQSPNSRLPTKIILPNKKPEKWSTGVAPGEYGGPPTTTKL. Phosphoserine is present on Ser117. The next 4 helical transmembrane spans lie at 213-233, 239-259, 276-296, and 304-324; these read KNKI…SAYI, IALS…MLGN, ANQP…RWNA, and FMHL…IATF.

The protein localises to the plastid. It localises to the chloroplast thylakoid membrane. Facilitates the assembly of the membrane proton channel of the chloroplastic F-type ATPase. Specifically required for the efficient assembly and integration of the CF(0) subunit c into the chloroplastic ATPase complex in the thylakoid membrane. The sequence is that of Protein CONSERVED ONLY IN THE GREEN LINEAGE 160, chloroplastic from Arabidopsis thaliana (Mouse-ear cress).